An 825-amino-acid polypeptide reads, in one-letter code: 5E5 antigen (825 aa).

The segment at 126–825 (LSRDGYETET…RPRPSPKSPR (700 aa)) is disordered. Residues 157 to 180 (PRAPPEPPDPGAPRPPPDPGPLPL) are compositionally biased toward pro residues. Polar residues predominate over residues 191–200 (VQVSTEQLLM). Over residues 217 to 237 (TRGDRTQEGGEKPREQREGPR) the composition is skewed to basic and acidic residues. Over residues 247–256 (QQEESPQQEP) the composition is skewed to low complexity. Basic and acidic residues-rich tracts occupy residues 257–277 (SSERGDSVGEREARSPGHEGE), 315–342 (VPKDRGEGGREWGPEAAQEHGEAARDWT), and 392–406 (QEREPGPRDRVESPR). Residues 437 to 449 (RRPRKRRGRKGRM) are compositionally biased toward basic residues. Residues 455–477 (TTATSASATGGPAEEAGASAPEG) show a composition bias toward low complexity. Over residues 485–505 (GRARGPRQQARRRHGPQRRRG) the composition is skewed to basic residues. Residues 524–536 (GTTSGEQRADQSQ) are compositionally biased toward polar residues. Over residues 537–562 (TLPALAGAPTAHAHAVPGPGPAAATL) the composition is skewed to low complexity. Residues 565–575 (RGRRGSWRGGR) show a composition bias toward basic residues. Gly residues predominate over residues 576 to 588 (RGGGAGASGGGRG). Residues 721–733 (FPPPPPTRPPPVL) are compositionally biased toward pro residues. A compositionally biased stretch (low complexity) spans 734 to 750 (LPLLRLTCAGDPGASRP).

Expressed in neurons.

It localises to the nucleus. Its function is as follows. Might have DNA-binding ability. The polypeptide is 5E5 antigen (Rattus norvegicus (Rat)).